The sequence spans 416 residues: Serine hydroxymethyltransferase (416 aa).

Residues Leu-121 and 125–127 each bind (6S)-5,6,7,8-tetrahydrofolate; that span reads GHL. N6-(pyridoxal phosphate)lysine is present on Lys-229.

The protein belongs to the SHMT family. In terms of assembly, homodimer. Requires pyridoxal 5'-phosphate as cofactor.

It is found in the cytoplasm. The catalysed reaction is (6R)-5,10-methylene-5,6,7,8-tetrahydrofolate + glycine + H2O = (6S)-5,6,7,8-tetrahydrofolate + L-serine. The protein operates within one-carbon metabolism; tetrahydrofolate interconversion. It functions in the pathway amino-acid biosynthesis; glycine biosynthesis; glycine from L-serine: step 1/1. Functionally, catalyzes the reversible interconversion of serine and glycine with tetrahydrofolate (THF) serving as the one-carbon carrier. This reaction serves as the major source of one-carbon groups required for the biosynthesis of purines, thymidylate, methionine, and other important biomolecules. Also exhibits THF-independent aldolase activity toward beta-hydroxyamino acids, producing glycine and aldehydes, via a retro-aldol mechanism. The chain is Serine hydroxymethyltransferase from Neisseria meningitidis serogroup C (strain 053442).